A 207-amino-acid polypeptide reads, in one-letter code: ADP-ribosylation factor (207 aa).

Gly-2 is lipidated: N-myristoyl glycine. GTP is bound by residues 32–39, 75–79, and 133–136; these read GLDGAGKT, DIGGQ, and NKID.

The protein belongs to the small GTPase superfamily. Arf family.

The protein resides in the golgi apparatus. Its function is as follows. GTP-binding protein involved in protein trafficking; may modulate vesicle budding and uncoating within the Golgi apparatus. The protein is ADP-ribosylation factor (ARF-1) of Encephalitozoon cuniculi (strain GB-M1) (Microsporidian parasite).